A 358-amino-acid polypeptide reads, in one-letter code: Bis(monoacylglycero)phosphate synthase CLN5 (358 aa).

The disordered stretch occupies residues 1–23 (MAQVGSAGPGACGRRGAGAGAGP). Residues 1-29 (MAQVGSAGPGACGRRGAGAGAGPERTTWR) lie on the Cytoplasmic side of the membrane. Positions 7–21 (AGPGACGRRGAGAGA) are enriched in gly residues. A helical; Signal-anchor for type II membrane protein transmembrane segment spans residues 30–46 (WAPALLWLATAAAVAGD). The Lumenal segment spans residues 47–358 (PSRRQWPVPY…NRKNRTLSGL (312 aa)). 2 disulfide bridges follow: Cys-69–Cys-158 and Cys-76–Cys-164. The active-site Proton acceptor is the His-116. N-linked (GlcNAc...) asparagine glycans are attached at residues Asn-129, Asn-142, Asn-177, and Asn-202. The active-site Nucleophile; Acyl-thioester intermediate is the Cys-230. Asn-254, Asn-270, and Asn-280 each carry an N-linked (GlcNAc...) asparagine glycan. The segment at 303–342 (FLLSLLQIFDAVVIHREFYLFYNFEYWFLPMKYPFIKITY) is membrane-anchoring. The N-linked (GlcNAc...) asparagine glycan is linked to Asn-352.

This sequence belongs to the CLN5 family. Multimer. Interacts with SORT1, RAB5A and RAB7A. Interacts with PPT1, TPP1, CLN3, CLN6, CLN8, ATP5F1A and ATP5F1B. N-glycosylated with both high mannose and complex type sugars. Glycosylation is important for proper folding and trafficking to the lysosomes. Post-translationally, the type II membrane signal anchor is proteolytically cleaved to produce a mature form that is transported to the lysosomes (Bis(monoacylglycero)phosphate synthase CLN5, secreted form). In terms of processing, can undergo proteolytic cleavage at the C-terminus, probably by a cysteine protease and may involve the removal of approximately 10-15 residues from the C-terminal end.

Its subcellular location is the lysosome. The protein localises to the membrane. The enzyme catalyses S-hexadecanoyl-L-cysteinyl-[protein] + H2O = L-cysteinyl-[protein] + hexadecanoate + H(+). It carries out the reaction 2 1-acyl-sn-glycero-3-phospho-(1'-sn-glycerol) = 1-acyl-sn-glycero-3-phospho-(3'-acyl-sn-1'-glycerol) + sn-glycero-3-phospho-(1'-sn-glycerol). It catalyses the reaction 2 1-(9Z-octadecenoyl)-sn-glycero-3-phospho-(1'-sn-glycerol) = 1-(9Z-octadecenoyl)-sn-glycero-3-phospho-(3'-(9Z-octadecenoyl)-1'-sn-glycerol) + sn-glycero-3-phospho-(1'-sn-glycerol). The catalysed reaction is 2 1-octadecanoyl-sn-glycero-3-phospho-(1'-sn-glycerol) = 1-octadecanoyl-sn-glycero-3-phospho-(3'-octadecanoyl-1'-sn-glycerol) + sn-glycero-3-phospho-(1'-sn-glycerol). The enzyme catalyses 2 1-hexadecanoyl-sn-glycero-3-phospho-(1'-sn-glycerol) = 1-hexadecanoyl-sn-glycero-3-phospho-(3'-hexadecanoyl-1'-sn-glycerol) + sn-glycero-3-phospho-(1'-sn-glycerol). It carries out the reaction 2 1-tetradecanoyl-sn-glycero-3-phospho-(1'-sn-glycerol) = 1-tetradecanoyl-sn-glycero-3-phospho-(3'-tetradecanoyl-1'-sn-glycerol) + sn-glycero-3-phospho-(1'-sn-glycerol). Its function is as follows. Catalyzes the synthesis of bis(monoacylglycero)phosphate (BMP) via transacylation of 2 molecules of lysophosphatidylglycerol (LPG). BMP also known as lysobisphosphatidic acid plays a key role in the formation of intraluminal vesicles and in maintaining intracellular cholesterol homeostasis. Can use only LPG as the exclusive lysophospholipid acyl donor for base exchange and displays BMP synthase activity towards various LPGs (LPG 14:0, LPG 16:0, LPG 18:0, LPG 18:1) with a higher preference for longer chain lengths. Plays a role in influencing the retrograde trafficking of lysosomal sorting receptors SORT1 and IGF2R from the endosomes to the trans-Golgi network by controlling the recruitment of retromer complex to the endosomal membrane. Regulates the localization and activation of RAB7A which is required to recruit the retromer complex to the endosomal membrane. Exhibits palmitoyl protein thioesterase (S-depalmitoylation) activity in vitro and most likely plays a role in protein S-depalmitoylation. The sequence is that of Bis(monoacylglycero)phosphate synthase CLN5 (CLN5) from Bos taurus (Bovine).